Reading from the N-terminus, the 177-residue chain is ATP synthase subunit b (177 aa).

The helical transmembrane segment at Phe-29–Pro-49 threads the bilayer.

This sequence belongs to the ATPase B chain family. As to quaternary structure, F-type ATPases have 2 components, F(1) - the catalytic core - and F(0) - the membrane proton channel. F(1) has five subunits: alpha(3), beta(3), gamma(1), delta(1), epsilon(1). F(0) has three main subunits: a(1), b(2) and c(10-14). The alpha and beta chains form an alternating ring which encloses part of the gamma chain. F(1) is attached to F(0) by a central stalk formed by the gamma and epsilon chains, while a peripheral stalk is formed by the delta and b chains.

The protein localises to the cell membrane. Its function is as follows. F(1)F(0) ATP synthase produces ATP from ADP in the presence of a proton or sodium gradient. F-type ATPases consist of two structural domains, F(1) containing the extramembraneous catalytic core and F(0) containing the membrane proton channel, linked together by a central stalk and a peripheral stalk. During catalysis, ATP synthesis in the catalytic domain of F(1) is coupled via a rotary mechanism of the central stalk subunits to proton translocation. In terms of biological role, component of the F(0) channel, it forms part of the peripheral stalk, linking F(1) to F(0). This is ATP synthase subunit b from Mycolicibacterium paratuberculosis (strain ATCC BAA-968 / K-10) (Mycobacterium paratuberculosis).